Reading from the N-terminus, the 414-residue chain is Alanine--glyoxylate aminotransferase (414 aa).

Residues 1-23 (MFQALAKASAALGPRAAGWVRTM) constitute a mitochondrion transit peptide. Residue K231 is modified to N6-(pyridoxal phosphate)lysine. 2 positions are modified to N6-acetyllysine: K256 and K334. Position 382 (R382) interacts with substrate.

Belongs to the class-V pyridoxal-phosphate-dependent aminotransferase family. In terms of assembly, homodimer. It depends on pyridoxal 5'-phosphate as a cofactor.

Its subcellular location is the peroxisome. It localises to the mitochondrion matrix. It catalyses the reaction L-serine + pyruvate = 3-hydroxypyruvate + L-alanine. The enzyme catalyses glyoxylate + L-alanine = glycine + pyruvate. Its function is as follows. Catalyzes the transamination of glyoxylate to glycine and contributes to the glyoxylate detoxification. Functionally, catalyzes the transamination between L-serine and pyruvate and weakly contributes to gluconeogenesis from the L-serine metabolism. This Callithrix jacchus (White-tufted-ear marmoset) protein is Alanine--glyoxylate aminotransferase.